The following is a 248-amino-acid chain: Putative homeobox-leucine zipper protein HOX26 (248 aa).

The interval 50–118 is disordered; the sequence is KKVAAAAVVA…GDEEGASRKK (69 aa). The span at 79 to 89 shows a compositional bias: basic residues; sequence RQRRSCKKGRR. The segment at residues 114 to 173 is a DNA-binding region (homeobox); the sequence is ASRKKLRLTGEQATLLEDSFRAHNILSHAEKQELAGKLGLSARQVEVWFQNRRARTKLKQ. Residues 172 to 216 form a leucine-zipper region; it reads KQTEADCDLLRRWCDHLAADNARLRRDLAELRRSSSSPPVSGLAV.

The protein belongs to the HD-ZIP homeobox family. Class II subfamily.

It is found in the nucleus. Functionally, probable transcription factor. The protein is Putative homeobox-leucine zipper protein HOX26 (HOX26) of Oryza sativa subsp. japonica (Rice).